The sequence spans 467 residues: Transcription factor TGAL7 (467 aa).

Residues 1–10 (MGGSREEDRQ) show a composition bias toward basic and acidic residues. Disordered regions lie at residues 1–42 (MGGS…KESS) and 105–184 (QLQV…KTLR). Residues 25 to 41 (SSSPTTMIASSSMSKES) show a composition bias toward low complexity. A compositionally biased stretch (polar residues) spans 120 to 129 (QGGQKINSSV). Residues 145 to 157 (KDNKNSSLIKKEG) are compositionally biased toward basic and acidic residues. A compositionally biased stretch (polar residues) spans 158–168 (SSSGKGATTSN). Basic and acidic residues predominate over residues 169 to 182 (DPEREGRRTLDPKT). Positions 179–223 (DPKTLRRLAQNREAARKSRLRKKAYIQQLESSRIRLSQLEQQVHV) constitute a bZIP domain. Residues 181 to 201 (KTLRRLAQNREAARKSRLRKK) are basic motif. The segment at 207 to 221 (LESSRIRLSQLEQQV) is leucine-zipper. Positions 247–458 (ASLFDLEYGR…RALSTLWVAR (212 aa)) constitute a DOG1 domain.

This sequence belongs to the bZIP family. As to quaternary structure, interacts with NPR5/NH4, NH5.1 and NH5.2.

The protein localises to the nucleus. Its function is as follows. Transcriptional regulator involved in defense response. The chain is Transcription factor TGAL7 from Oryza sativa subsp. japonica (Rice).